We begin with the raw amino-acid sequence, 361 residues long: Phosphoserine aminotransferase (361 aa).

L-glutamate is bound at residue arginine 42. Pyridoxal 5'-phosphate contacts are provided by residues 76–77 (AT), tryptophan 102, threonine 152, aspartate 172, and glutamine 195. At lysine 196 the chain carries N6-(pyridoxal phosphate)lysine. Pyridoxal 5'-phosphate is bound at residue 237–238 (NT).

It belongs to the class-V pyridoxal-phosphate-dependent aminotransferase family. SerC subfamily. In terms of assembly, homodimer. Pyridoxal 5'-phosphate is required as a cofactor.

It is found in the cytoplasm. The catalysed reaction is O-phospho-L-serine + 2-oxoglutarate = 3-phosphooxypyruvate + L-glutamate. It catalyses the reaction 4-(phosphooxy)-L-threonine + 2-oxoglutarate = (R)-3-hydroxy-2-oxo-4-phosphooxybutanoate + L-glutamate. The protein operates within amino-acid biosynthesis; L-serine biosynthesis; L-serine from 3-phospho-D-glycerate: step 2/3. It functions in the pathway cofactor biosynthesis; pyridoxine 5'-phosphate biosynthesis; pyridoxine 5'-phosphate from D-erythrose 4-phosphate: step 3/5. Functionally, catalyzes the reversible conversion of 3-phosphohydroxypyruvate to phosphoserine and of 3-hydroxy-2-oxo-4-phosphonooxybutanoate to phosphohydroxythreonine. The polypeptide is Phosphoserine aminotransferase (Xanthomonas oryzae pv. oryzae (strain MAFF 311018)).